The primary structure comprises 763 residues: Sphingoid long-chain bases kinase 1 (763 aa).

The interval 34–81 (TGGSQQSSPIVFPEKRNKKVKASSRRGEVTNDPQVKPKPDEHRIDIGG) is disordered. A compositionally biased stretch (basic and acidic residues) spans 58 to 81 (RRGEVTNDPQVKPKPDEHRIDIGG). The region spanning 245-384 (KSAPKMLVIL…TDVFAVEWIH (140 aa)) is the DAGKc domain. Residues 255–257 (NPR) and Thr-287 each bind ATP. Substrate is bound at residue 313–316 (GGDG). Asp-315 serves as the catalytic Proton donor/acceptor. ATP-binding positions include Glu-320, 345 to 347 (GSD), and Arg-418. The interval 561–603 (MGLTSVQDPPTRCSWGNTGGQDREDISSTVSDPGPIWDAGPKW) is disordered. 733-735 (DGE) serves as a coordination point for ATP.

In terms of tissue distribution, expressed in roots, stems, leaves and at higher levels in flowers.

Its function is as follows. Involved in the production of sphingolipid metabolites. Active on sphingosine, phytosphingosine (PHS, 4-hydroxysphinganine), D-erythro-dihydrosphingosine, D-erythro-sphingosine and trans-4, trans-8-sphingadienine, an LCB found exclusively in plants, but not on N-acetyl-dihydrosphingosine (C2-dihydroceramide) and D-threo-dihydrosphingosine. This chain is Sphingoid long-chain bases kinase 1 (LCBK1), found in Arabidopsis thaliana (Mouse-ear cress).